A 437-amino-acid polypeptide reads, in one-letter code: Chloride intracellular channel protein 5 (437 aa).

The segment covering M1 to V14 has biased composition (polar residues). Residues M1 to A197 form a disordered region. The segment covering D34–N45 has biased composition (basic and acidic residues). Tandem repeats lie at residues Q118–Q125, A126–Q133, A134–Q141, and G142–Q149. A 4 X 8 AA tandem repeats of [AGQ]-[SP]-D-[PS]-E-E-P-Q region spans residues Q118 to Q149. The span at S121–A157 shows a compositional bias: acidic residues. Residues S161 to S184 show a composition bias toward polar residues. A G-site motif is present at residues C217–S220. A helical membrane pass occupies residues F219–V239. A GST C-terminal domain is found at N263 to Y427.

The protein belongs to the chloride channel CLIC family. In terms of assembly, component of a multimeric complex consisting of several cytoskeletal proteins, including actin, ezrin, alpha-actinin, gelsolin, and IQGAP1. Interacts with AKAP9. Interacts with TPRN. TPRN, CLIC5 and PTPQR form concentric rings at the base of stereocilia and may form a complex. Interacts with EZR, MYO6 and RDX; the proteins may work together as a complex to stabilize linkages between the plasma membrane and subjacent actin cytoskeleton at the stereocilium base. Phosphorylated. Expressed in most tissues. Higher levels found in kidney, heart, skeletal muscle, T84 and PANC-1 cells.

It localises to the golgi apparatus. It is found in the cytoplasm. Its subcellular location is the cytoskeleton. The protein localises to the microtubule organizing center. The protein resides in the centrosome. It localises to the cell cortex. It is found in the membrane. Its subcellular location is the apical cell membrane. The protein localises to the mitochondrion. The protein resides in the cell projection. It localises to the stereocilium. It catalyses the reaction Na(+)(in) = Na(+)(out). It carries out the reaction K(+)(in) = K(+)(out). The catalysed reaction is chloride(in) = chloride(out). Its activity is regulated as follows. Inhibited by F-actin. In the soluble state, catalyzes glutaredoxin-like thiol disulfide exchange reactions with reduced glutathione as electron donor. Can insert into membranes and form non-selective ion channels almost equally permeable to Na(+), K(+) and Cl(-). Required for normal hearing. It is necessary for the formation of stereocilia in the inner ear and normal development of the organ of Corti. May play a role in the regulation of transepithelial ion absorption and secretion. Is required for the development and/or maintenance of the proper glomerular endothelial cell and podocyte architecture. Plays a role in formation of the lens suture in the eye, which is important for normal optical properties of the lens. This chain is Chloride intracellular channel protein 5 (CLIC5), found in Bos taurus (Bovine).